A 288-amino-acid chain; its full sequence is Formamidopyrimidine-DNA glycosylase (288 aa).

Proline 2 (schiff-base intermediate with DNA) is an active-site residue. The active-site Proton donor is the glutamate 3. Catalysis depends on lysine 58, which acts as the Proton donor; for beta-elimination activity. Positions 99, 118, and 161 each coordinate DNA. The FPG-type zinc finger occupies 252-288 (RVYDREAEPCPREGCGGTIKRIVQAGRSTFFCAKCQR). Residue arginine 278 is the Proton donor; for delta-elimination activity of the active site.

Belongs to the FPG family. In terms of assembly, monomer. It depends on Zn(2+) as a cofactor.

It catalyses the reaction Hydrolysis of DNA containing ring-opened 7-methylguanine residues, releasing 2,6-diamino-4-hydroxy-5-(N-methyl)formamidopyrimidine.. The enzyme catalyses 2'-deoxyribonucleotide-(2'-deoxyribose 5'-phosphate)-2'-deoxyribonucleotide-DNA = a 3'-end 2'-deoxyribonucleotide-(2,3-dehydro-2,3-deoxyribose 5'-phosphate)-DNA + a 5'-end 5'-phospho-2'-deoxyribonucleoside-DNA + H(+). Functionally, involved in base excision repair of DNA damaged by oxidation or by mutagenic agents. Acts as a DNA glycosylase that recognizes and removes damaged bases. Has a preference for oxidized purines, such as 7,8-dihydro-8-oxoguanine (8-oxoG). Has AP (apurinic/apyrimidinic) lyase activity and introduces nicks in the DNA strand. Cleaves the DNA backbone by beta-delta elimination to generate a single-strand break at the site of the removed base with both 3'- and 5'-phosphates. The polypeptide is Formamidopyrimidine-DNA glycosylase (Beijerinckia indica subsp. indica (strain ATCC 9039 / DSM 1715 / NCIMB 8712)).